A 249-amino-acid chain; its full sequence is 1-(5-phosphoribosyl)-5-[(5-phosphoribosylamino)methylideneamino] imidazole-4-carboxamide isomerase (249 aa).

D11 functions as the Proton acceptor in the catalytic mechanism. The active-site Proton donor is the D133.

It belongs to the HisA/HisF family.

It localises to the cytoplasm. It carries out the reaction 1-(5-phospho-beta-D-ribosyl)-5-[(5-phospho-beta-D-ribosylamino)methylideneamino]imidazole-4-carboxamide = 5-[(5-phospho-1-deoxy-D-ribulos-1-ylimino)methylamino]-1-(5-phospho-beta-D-ribosyl)imidazole-4-carboxamide. Its pathway is amino-acid biosynthesis; L-histidine biosynthesis; L-histidine from 5-phospho-alpha-D-ribose 1-diphosphate: step 4/9. This is 1-(5-phosphoribosyl)-5-[(5-phosphoribosylamino)methylideneamino] imidazole-4-carboxamide isomerase from Haemophilus influenzae (strain 86-028NP).